A 178-amino-acid chain; its full sequence is Ribulose bisphosphate carboxylase small subunit, chloroplastic (178 aa).

Residues 1–54 (MASISSSVATVSRTAPAQANMVAPFTGLKSNAAFPTTKKANDFSTLPSNGGRVQ) constitute a chloroplast transit peptide.

This sequence belongs to the RuBisCO small chain family. As to quaternary structure, heterohexadecamer of 8 large and 8 small subunits.

The protein localises to the plastid. It is found in the chloroplast. In terms of biological role, ruBisCO catalyzes two reactions: the carboxylation of D-ribulose 1,5-bisphosphate, the primary event in carbon dioxide fixation, as well as the oxidative fragmentation of the pentose substrate. Both reactions occur simultaneously and in competition at the same active site. Although the small subunit is not catalytic it is essential for maximal activity. This Helianthus annuus (Common sunflower) protein is Ribulose bisphosphate carboxylase small subunit, chloroplastic.